The following is a 601-amino-acid chain: Proline--tRNA ligase (601 aa).

This sequence belongs to the class-II aminoacyl-tRNA synthetase family. ProS type 1 subfamily. As to quaternary structure, homodimer.

The protein resides in the cytoplasm. The enzyme catalyses tRNA(Pro) + L-proline + ATP = L-prolyl-tRNA(Pro) + AMP + diphosphate. Its function is as follows. Catalyzes the attachment of proline to tRNA(Pro) in a two-step reaction: proline is first activated by ATP to form Pro-AMP and then transferred to the acceptor end of tRNA(Pro). As ProRS can inadvertently accommodate and process non-cognate amino acids such as alanine and cysteine, to avoid such errors it has two additional distinct editing activities against alanine. One activity is designated as 'pretransfer' editing and involves the tRNA(Pro)-independent hydrolysis of activated Ala-AMP. The other activity is designated 'posttransfer' editing and involves deacylation of mischarged Ala-tRNA(Pro). The misacylated Cys-tRNA(Pro) is not edited by ProRS. This Picosynechococcus sp. (strain ATCC 27264 / PCC 7002 / PR-6) (Agmenellum quadruplicatum) protein is Proline--tRNA ligase.